The primary structure comprises 255 residues: uncharacterized protein (255 aa).

The interval 42–67 (ACSGSPPEPGKGRPDTTPEQEVPVTA) is disordered.

This is an uncharacterized protein from Mycobacterium tuberculosis (strain CDC 1551 / Oshkosh).